The primary structure comprises 144 residues: uncharacterized protein (144 aa).

This is an uncharacterized protein from Escherichia coli O157:H7.